Consider the following 245-residue polypeptide: Phycocyanobilin:ferredoxin oxidoreductase (245 aa).

Belongs to the HY2 family.

The enzyme catalyses (2R,3Z)-phycocyanobilin + 4 oxidized [2Fe-2S]-[ferredoxin] = biliverdin IXalpha + 4 reduced [2Fe-2S]-[ferredoxin] + 4 H(+). Catalyzes the four-electron reduction of biliverdin IX-alpha (2-electron reduction at both the A and D rings); the reaction proceeds via an isolatable 2-electron intermediate, 181,182-dihydrobiliverdin. This Nostoc punctiforme (strain ATCC 29133 / PCC 73102) protein is Phycocyanobilin:ferredoxin oxidoreductase (pcyA).